The following is a 484-amino-acid chain: ATP-dependent rRNA helicase RRP3 (484 aa).

A compositionally biased stretch (polar residues) spans 1 to 10 (MAIVGSNSVS). The disordered stretch occupies residues 1 to 61 (MAIVGSNSVS…SSQKSKNIVE (61 aa)). Residues 18 to 54 (RNDARDLAEKIKRNALKKQEQDKKQQLEEESKPESSQ) show a composition bias toward basic and acidic residues. Positions 71–99 (STFSELKLVPELLEAIQQMKFSKPTPIQS) match the Q motif motif. The region spanning 102-273 (IPHALEGKDI…RASLHNPVRV (172 aa)) is the Helicase ATP-binding domain. 115–122 (AQTGSGKT) contacts ATP. Positions 221-224 (DEAD) match the DEAD box motif. The region spanning 300–444 (YLIHLLNEFV…KDPSPPKAML (145 aa)) is the Helicase C-terminal domain. The disordered stretch occupies residues 460-484 (RQTKEFHEKTRRGRRGKDDKDREEH). The segment covering 475 to 484 (GKDDKDREEH) has biased composition (basic and acidic residues).

Belongs to the DEAD box helicase family. DDX47/RRP3 subfamily. Interacts with the SSU processome.

Its subcellular location is the nucleus. It carries out the reaction ATP + H2O = ADP + phosphate + H(+). Its function is as follows. ATP-dependent rRNA helicase required for pre-ribosomal RNA processing. Involved in the maturation of the 35S-pre-rRNA and to its cleavage to mature 18S rRNA. This Scheffersomyces stipitis (strain ATCC 58785 / CBS 6054 / NBRC 10063 / NRRL Y-11545) (Yeast) protein is ATP-dependent rRNA helicase RRP3.